The chain runs to 182 residues: Adenylate kinase (182 aa).

12–17 is an ATP binding site; that stretch reads GAGKGT. The NMP stretch occupies residues 32 to 61; it reads STGDLLRAEVKAGSELGKEAEAVMNRGELV. Residues T33, R38, 59–61, 85–88, and Q92 contribute to the AMP site; these read ELV and GFPR. Residues 126 to 132 form an LID region; that stretch reads ARGRADD. R127 is a binding site for ATP. AMP contacts are provided by R129 and R140. G168 contributes to the ATP binding site.

The protein belongs to the adenylate kinase family. In terms of assembly, monomer.

The protein localises to the cytoplasm. It catalyses the reaction AMP + ATP = 2 ADP. It functions in the pathway purine metabolism; AMP biosynthesis via salvage pathway; AMP from ADP: step 1/1. Functionally, catalyzes the reversible transfer of the terminal phosphate group between ATP and AMP. Plays an important role in cellular energy homeostasis and in adenine nucleotide metabolism. The chain is Adenylate kinase from Synechococcus sp. (strain RCC307).